Reading from the N-terminus, the 132-residue chain is Small ribosomal subunit protein uS11 (132 aa).

The protein belongs to the universal ribosomal protein uS11 family. As to quaternary structure, part of the 30S ribosomal subunit. Interacts with proteins S7 and S18. Binds to IF-3.

In terms of biological role, located on the platform of the 30S subunit, it bridges several disparate RNA helices of the 16S rRNA. Forms part of the Shine-Dalgarno cleft in the 70S ribosome. The chain is Small ribosomal subunit protein uS11 from Bifidobacterium animalis subsp. lactis (strain AD011).